A 955-amino-acid chain; its full sequence is Centrosomal protein of 112 kDa (955 aa).

The stretch at 277-954 (QKHDADVQKI…QEELTTYQGR (678 aa)) forms a coiled coil.

It is found in the cytoplasm. The protein localises to the cytoskeleton. Its subcellular location is the microtubule organizing center. It localises to the centrosome. This chain is Centrosomal protein of 112 kDa (CEP112), found in Homo sapiens (Human).